The sequence spans 379 residues: MNNEESNAKLRFIISGGGTGGHIFPAISIADALRRRYPECEILFVGAEGRMEMERVPRSGYEIVGLPIKGLDRKHLLSNYKVAIAVIRSMRLANKTIRNFRPDMVIGVGGYASGPTLRRAHSLGIPTLIQEQNSYAGVTNKLLSRGAHKICVAYPEMDKFFSPEKIVFTGNPIRPEIEFGHPSRSESLRFFGFEQSESPVVLVVGGSLGALTINKSIADKLGKWAESGVHLIWQTGKNYIETARKAVENHPGLKCYVNDFITRMDYAYCAADLVVSRAGACSISELCLLGKPTILVPSPNVAEDHQTKNALALSTRAAAVLIPDTEAIELLTDTALSLVRDPAELSSLSEQIRTLAKPQAADRIVDEIARIVEHEKRAN.

Residues 19 to 21 (TGG), Asn133, Arg174, Ser207, Ile261, and Gln306 contribute to the UDP-N-acetyl-alpha-D-glucosamine site.

It belongs to the glycosyltransferase 28 family. MurG subfamily.

The protein localises to the cell inner membrane. The catalysed reaction is di-trans,octa-cis-undecaprenyl diphospho-N-acetyl-alpha-D-muramoyl-L-alanyl-D-glutamyl-meso-2,6-diaminopimeloyl-D-alanyl-D-alanine + UDP-N-acetyl-alpha-D-glucosamine = di-trans,octa-cis-undecaprenyl diphospho-[N-acetyl-alpha-D-glucosaminyl-(1-&gt;4)]-N-acetyl-alpha-D-muramoyl-L-alanyl-D-glutamyl-meso-2,6-diaminopimeloyl-D-alanyl-D-alanine + UDP + H(+). The protein operates within cell wall biogenesis; peptidoglycan biosynthesis. Cell wall formation. Catalyzes the transfer of a GlcNAc subunit on undecaprenyl-pyrophosphoryl-MurNAc-pentapeptide (lipid intermediate I) to form undecaprenyl-pyrophosphoryl-MurNAc-(pentapeptide)GlcNAc (lipid intermediate II). This is UDP-N-acetylglucosamine--N-acetylmuramyl-(pentapeptide) pyrophosphoryl-undecaprenol N-acetylglucosamine transferase from Porphyromonas gingivalis (strain ATCC BAA-308 / W83).